The following is a 431-amino-acid chain: Enolase (431 aa).

Gln163 lines the (2R)-2-phosphoglycerate pocket. Glu205 acts as the Proton donor in catalysis. The Mg(2+) site is built by Asp242, Glu288, and Asp315. (2R)-2-phosphoglycerate contacts are provided by Lys340, Arg369, Ser370, and Lys391. Lys340 serves as the catalytic Proton acceptor.

Belongs to the enolase family. Mg(2+) serves as cofactor.

It localises to the cytoplasm. It is found in the secreted. Its subcellular location is the cell surface. The enzyme catalyses (2R)-2-phosphoglycerate = phosphoenolpyruvate + H2O. Its pathway is carbohydrate degradation; glycolysis; pyruvate from D-glyceraldehyde 3-phosphate: step 4/5. Its function is as follows. Catalyzes the reversible conversion of 2-phosphoglycerate (2-PG) into phosphoenolpyruvate (PEP). It is essential for the degradation of carbohydrates via glycolysis. The protein is Enolase of Bacillus anthracis (strain A0248).